The following is a 176-amino-acid chain: RNA pyrophosphohydrolase (176 aa).

The Nudix hydrolase domain maps to 6–149 (GYRPNVGIIL…KRQVYQQALF (144 aa)). The short motif at 38 to 59 (GGIKHGESPEQAMFRELFEEVG) is the Nudix box element.

The protein belongs to the Nudix hydrolase family. RppH subfamily. The cofactor is a divalent metal cation.

Accelerates the degradation of transcripts by removing pyrophosphate from the 5'-end of triphosphorylated RNA, leading to a more labile monophosphorylated state that can stimulate subsequent ribonuclease cleavage. This Aromatoleum aromaticum (strain DSM 19018 / LMG 30748 / EbN1) (Azoarcus sp. (strain EbN1)) protein is RNA pyrophosphohydrolase.